We begin with the raw amino-acid sequence, 717 residues long: Fatty acid oxidation complex subunit alpha (717 aa).

The interval 1 to 190 (MIHAGNAITV…KDGAVDAVVS (190 aa)) is enoyl-CoA hydratase/isomerase. A substrate-binding site is contributed by Asp298. Residues 313-717 (HPVNQAAVLG…MAENNKKFYG (405 aa)) form a 3-hydroxyacyl-CoA dehydrogenase region. NAD(+)-binding positions include Met326, Asp345, 402-404 (VTE), Lys409, and Ser431. The active-site For 3-hydroxyacyl-CoA dehydrogenase activity is His452. Asn455 contacts NAD(+). Asn502 contacts substrate.

The protein in the N-terminal section; belongs to the enoyl-CoA hydratase/isomerase family. In the C-terminal section; belongs to the 3-hydroxyacyl-CoA dehydrogenase family. Heterotetramer of two alpha chains (FadB) and two beta chains (FadA).

It carries out the reaction a (3S)-3-hydroxyacyl-CoA + NAD(+) = a 3-oxoacyl-CoA + NADH + H(+). The catalysed reaction is a (3S)-3-hydroxyacyl-CoA = a (2E)-enoyl-CoA + H2O. The enzyme catalyses a 4-saturated-(3S)-3-hydroxyacyl-CoA = a (3E)-enoyl-CoA + H2O. It catalyses the reaction (3S)-3-hydroxybutanoyl-CoA = (3R)-3-hydroxybutanoyl-CoA. It carries out the reaction a (3Z)-enoyl-CoA = a 4-saturated (2E)-enoyl-CoA. The catalysed reaction is a (3E)-enoyl-CoA = a 4-saturated (2E)-enoyl-CoA. It participates in lipid metabolism; fatty acid beta-oxidation. Involved in the aerobic and anaerobic degradation of long-chain fatty acids via beta-oxidation cycle. Catalyzes the formation of 3-oxoacyl-CoA from enoyl-CoA via L-3-hydroxyacyl-CoA. It can also use D-3-hydroxyacyl-CoA and cis-3-enoyl-CoA as substrate. The protein is Fatty acid oxidation complex subunit alpha of Acinetobacter baylyi (strain ATCC 33305 / BD413 / ADP1).